Here is a 280-residue protein sequence, read N- to C-terminus: Orotidine 5'-phosphate decarboxylase (280 aa).

Substrate-binding positions include D40, 62–64, 93–102, Y228, and R246; these read KTH and DRKFVDIGNT. The active-site Proton donor is the K95.

This sequence belongs to the OMP decarboxylase family.

The catalysed reaction is orotidine 5'-phosphate + H(+) = UMP + CO2. The protein operates within pyrimidine metabolism; UMP biosynthesis via de novo pathway; UMP from orotate: step 2/2. This is Orotidine 5'-phosphate decarboxylase (PYRG) from Solorina crocea.